The primary structure comprises 273 residues: Ribosomal RNA small subunit methyltransferase A (273 aa).

6 residues coordinate S-adenosyl-L-methionine: Asn-18, Leu-20, Gly-45, Glu-66, Asp-91, and Asn-113.

This sequence belongs to the class I-like SAM-binding methyltransferase superfamily. rRNA adenine N(6)-methyltransferase family. RsmA subfamily.

The protein resides in the cytoplasm. It carries out the reaction adenosine(1518)/adenosine(1519) in 16S rRNA + 4 S-adenosyl-L-methionine = N(6)-dimethyladenosine(1518)/N(6)-dimethyladenosine(1519) in 16S rRNA + 4 S-adenosyl-L-homocysteine + 4 H(+). Its function is as follows. Specifically dimethylates two adjacent adenosines (A1518 and A1519) in the loop of a conserved hairpin near the 3'-end of 16S rRNA in the 30S particle. May play a critical role in biogenesis of 30S subunits. The protein is Ribosomal RNA small subunit methyltransferase A of Salmonella schwarzengrund (strain CVM19633).